Reading from the N-terminus, the 184-residue chain is Large ribosomal subunit protein uL6 (184 aa).

It belongs to the universal ribosomal protein uL6 family. In terms of assembly, part of the 50S ribosomal subunit.

Its function is as follows. This protein binds to the 23S rRNA, and is important in its secondary structure. It is located near the subunit interface in the base of the L7/L12 stalk, and near the tRNA binding site of the peptidyltransferase center. The sequence is that of Large ribosomal subunit protein uL6 from Thermomicrobium roseum (strain ATCC 27502 / DSM 5159 / P-2).